We begin with the raw amino-acid sequence, 269 residues long: Staphylococcal secretory antigen ssaA2 (269 aa).

Residues 1 to 27 (MKKIATATIATAGFATIAIASGNQAHA) form the signal peptide. Tandem repeats lie at residues 83–85 (YNN), 88–90 (YNN), 91–93 (YNN), 97–99 (YNN), 103–105 (YNN), 106–108 (YSN), and 115–117 (YNN). Residues 83 to 115 (YNNYNYNNYNNGYSYNNYSRYNNYSNNNQSYNY) are 7 X 3 AA repeats of Y-[NS]-N. In terms of domain architecture, Peptidase C51 spans 148–269 (MAPSSNGRSI…SQAAGYNFIH (122 aa)).

Its subcellular location is the secreted. Not known; immunogenic protein. This is Staphylococcal secretory antigen ssaA2 (ssaA2) from Staphylococcus aureus (strain MSSA476).